The primary structure comprises 986 residues: Bifunctional glutamine synthetase adenylyltransferase/adenylyl-removing enzyme (986 aa).

The adenylyl removase stretch occupies residues 1–475; sequence MSFPLAHVDA…VFDHLIGEEK (475 aa). Residues 481 to 986 form an adenylyl transferase region; sequence TETLWHDFLE…LFEHNDKYEE (506 aa).

It belongs to the GlnE family. Requires Mg(2+) as cofactor.

The enzyme catalyses [glutamine synthetase]-O(4)-(5'-adenylyl)-L-tyrosine + phosphate = [glutamine synthetase]-L-tyrosine + ADP. It carries out the reaction [glutamine synthetase]-L-tyrosine + ATP = [glutamine synthetase]-O(4)-(5'-adenylyl)-L-tyrosine + diphosphate. In terms of biological role, involved in the regulation of glutamine synthetase GlnA, a key enzyme in the process to assimilate ammonia. When cellular nitrogen levels are high, the C-terminal adenylyl transferase (AT) inactivates GlnA by covalent transfer of an adenylyl group from ATP to specific tyrosine residue of GlnA, thus reducing its activity. Conversely, when nitrogen levels are low, the N-terminal adenylyl removase (AR) activates GlnA by removing the adenylyl group by phosphorolysis, increasing its activity. The regulatory region of GlnE binds the signal transduction protein PII (GlnB) which indicates the nitrogen status of the cell. This Pasteurella multocida (strain Pm70) protein is Bifunctional glutamine synthetase adenylyltransferase/adenylyl-removing enzyme.